A 165-amino-acid chain; its full sequence is HTH-type transcriptional regulator IscR (165 aa).

Residues 2-131 (RLTSKGRYAV…NNITLAELVS (130 aa)) enclose the HTH rrf2-type domain. The segment at residues 28–51 (LAEISERQGISLSYLEQLFSRLRK) is a DNA-binding region (H-T-H motif). C92, C98, and C104 together coordinate [2Fe-2S] cluster. The segment at 144-165 (NDTRRPLTNGRPQETINVNLHA) is disordered. A compositionally biased stretch (polar residues) spans 153–165 (GRPQETINVNLHA).

The cofactor is [2Fe-2S] cluster.

Functionally, regulates the transcription of several operons and genes involved in the biogenesis of Fe-S clusters and Fe-S-containing proteins. This Sodalis glossinidius (strain morsitans) protein is HTH-type transcriptional regulator IscR.